A 202-amino-acid chain; its full sequence is N-(5'-phosphoribosyl)anthranilate isomerase (202 aa).

Belongs to the TrpF family.

The enzyme catalyses N-(5-phospho-beta-D-ribosyl)anthranilate = 1-(2-carboxyphenylamino)-1-deoxy-D-ribulose 5-phosphate. It participates in amino-acid biosynthesis; L-tryptophan biosynthesis; L-tryptophan from chorismate: step 3/5. The polypeptide is N-(5'-phosphoribosyl)anthranilate isomerase (Bacillus cereus (strain ATCC 14579 / DSM 31 / CCUG 7414 / JCM 2152 / NBRC 15305 / NCIMB 9373 / NCTC 2599 / NRRL B-3711)).